Here is a 480-residue protein sequence, read N- to C-terminus: Putative auxin transporter-like protein 4 (480 aa).

The Cytoplasmic portion of the chain corresponds to 1-66 (MASEKVETIV…DAWFSCASNQ (66 aa)). A helical membrane pass occupies residues 67–84 (VAQVLLTLPYSFSQLGMA). At 85–86 (SG) the chain is on the extracellular side. The helical transmembrane segment at 87-107 (VAFQVFYGLMGSWTAYLISVL) threads the bilayer. Over 108 to 143 (YVEYRTRRERDKVDFRNHVIQWFEVLDGLLGRHWRN) the chain is Cytoplasmic. A helical transmembrane segment spans residues 144–164 (AGLLFNCTFLLFGSVIQLIAC). The Extracellular portion of the chain corresponds to 165 to 179 (ASNIYYINDRLDKRT). The helical transmembrane segment at 180–200 (WTYIFGACCATTVFVPSFHNY) threads the bilayer. Residues 201 to 203 (RVW) are Cytoplasmic-facing. The helical transmembrane segment at 204–224 (SFLGLLMTSYTAWYLTVAAVV) threads the bilayer. Residues 225 to 241 (HGKVDGAAPRAGPSKTM) are Extracellular-facing. Residues 242 to 262 (VLYFTGATNILYTFGGHAVTV) form a helical membrane-spanning segment. The Cytoplasmic portion of the chain corresponds to 263–275 (EIMHAMWRPRRFK). Residues 276–296 (MIYLAATAYVLTLTLPSAAAM) form a helical membrane-spanning segment. Residues 297–323 (YWAFGDALLDHSNAFALLPRTPWRDAA) lie on the Extracellular side of the membrane. A helical membrane pass occupies residues 324–344 (VVLMLIHQFITFGFACTPLYF). Residues 345–365 (VWEKAIGVHGGAGVLRRAAAR) lie on the Cytoplasmic side of the membrane. The chain crosses the membrane as a helical span at residues 366–386 (LPVVLPIWFLAVIFPFFGPIN). Serine 387 is a topological domain (extracellular). The helical transmembrane segment at 388–408 (TVGSFLVSFTVYIIPAMAHMA) threads the bilayer. Residues 409–433 (TFAPAAARENAVEPPPRALGGWPGT) lie on the Cytoplasmic side of the membrane. The chain crosses the membrane as a helical span at residues 434–454 (FAANCFVVAWVLVVGFGFGGW). Residues 455–480 (ASTVNFVRQVDTFGLFTKCYQCPPRH) are Extracellular-facing.

It belongs to the amino acid/polyamine transporter 2 family. Amino acid/auxin permease (AAAP) (TC 2.A.18.1) subfamily.

It localises to the cell membrane. Its function is as follows. Carrier protein involved in proton-driven auxin influx. May mediate the formation of auxin gradient from developing leaves (site of auxin biosynthesis) to tips. In Oryza sativa subsp. japonica (Rice), this protein is Putative auxin transporter-like protein 4.